The chain runs to 409 residues: SPI-1 type 3 secretion system translocon protein SctB (409 aa).

Residues 119-140 (ISGMSSSAVALLAAANTLMLTL) form a helical membrane-spanning segment.

The protein belongs to the SctB/SipC family. In terms of assembly, the core secretion machinery of the T3SS is composed of approximately 20 different proteins, including cytoplasmic components, a base, an export apparatus and a needle. This subunit is involved in the formation of a pore, called the translocon, in host membrane.

The protein localises to the secreted. It is found in the host membrane. Component of the type III secretion system 1 (SPI-1 T3SS), also called injectisome, which is used to inject bacterial effector proteins into eukaryotic host cells. SipB/SctE1 and SipC/SctB1 are inserted into the host membrane where they form a pore and allow the translocation of effector proteins into the cytosol of target cells. This Salmonella typhimurium (strain 14028s / SGSC 2262) protein is SPI-1 type 3 secretion system translocon protein SctB.